A 364-amino-acid chain; its full sequence is MKYIPVYQPSLTGKEKEYVNECLDSTWISSKGNYIQKFENKFAEQNHVQYATTVSNGTVALHLALLALGISEGDEVIVPTLTYIASVNAIKYTGATPIFVDSDNETWQMSVSDIEQKITNKTKAIMCVHLYGHPCDMEQIVELAKSRNLFVIEDCAEAFGSKYKGKYVGTFGDISTFSFFGNKTITTGEGGMVVTNDKTLYDRCLHFKGQGLAVHRQYWHDVIGYNYRMTNICAAIGLAQLEQADDFISRKREIADIYKKNINSLVQVHKESKDVFHTYWMVSILTRTAEEREELRNHLADKLIETRPVFYPVHTMPMYSEKYQKHPIAEDLGWRGINLPSFPSLSNEQVIYICESINEFYSDK.

The residue at position 183 (Lys-183) is an N6-(pyridoxal phosphate)lysine.

The protein belongs to the DegT/DnrJ/EryC1 family. As to quaternary structure, homodecamer. Pyridoxal 5'-phosphate serves as cofactor.

The catalysed reaction is GDP-alpha-D-perosamine + 2-oxoglutarate = GDP-4-dehydro-alpha-D-rhamnose + L-glutamate. It participates in bacterial outer membrane biogenesis; LPS O-antigen biosynthesis. With respect to regulation, divalent ions have no significant effect on activity. Functionally, catalyzes the synthesis of GDP-perosamine from GDP-4-keto-6-deoxy-D-mannose and L-glutamate. Can use only L-glutamate as amino donor. In Escherichia coli O157:H7, this protein is GDP-perosamine synthase.